The primary structure comprises 298 residues: Tyrosine recombinase XerC (298 aa).

Residues 1 to 84 (MNHIQEAFLN…TLRTFYEYWM (84 aa)) enclose the Core-binding (CB) domain. Positions 105–286 (YLPQFFYEEE…SNQQLRKVYL (182 aa)) constitute a Tyr recombinase domain. Active-site residues include arginine 145, lysine 169, histidine 238, arginine 241, and histidine 264. Tyrosine 273 (O-(3'-phospho-DNA)-tyrosine intermediate) is an active-site residue.

It belongs to the 'phage' integrase family. XerC subfamily. As to quaternary structure, forms a cyclic heterotetrameric complex composed of two molecules of XerC and two molecules of XerD.

It is found in the cytoplasm. Functionally, site-specific tyrosine recombinase, which acts by catalyzing the cutting and rejoining of the recombining DNA molecules. The XerC-XerD complex is essential to convert dimers of the bacterial chromosome into monomers to permit their segregation at cell division. It also contributes to the segregational stability of plasmids. In Staphylococcus aureus (strain bovine RF122 / ET3-1), this protein is Tyrosine recombinase XerC.